The sequence spans 332 residues: Ribosomal RNA small subunit methyltransferase C (332 aa).

The protein belongs to the methyltransferase superfamily. RsmC family. In terms of assembly, monomer.

Its subcellular location is the cytoplasm. It carries out the reaction guanosine(1207) in 16S rRNA + S-adenosyl-L-methionine = N(2)-methylguanosine(1207) in 16S rRNA + S-adenosyl-L-homocysteine + H(+). Functionally, specifically methylates the guanine in position 1207 of 16S rRNA in the 30S particle. The sequence is that of Ribosomal RNA small subunit methyltransferase C from Pseudomonas putida (strain ATCC 700007 / DSM 6899 / JCM 31910 / BCRC 17059 / LMG 24140 / F1).